The sequence spans 159 residues: Phosphopantetheine adenylyltransferase (159 aa).

Residue Thr9 participates in substrate binding. ATP is bound by residues 9–10 (TF) and His17. Positions 41, 73, and 87 each coordinate substrate. ATP is bound by residues 88-90 (GLR), Glu98, and 123-129 (YSFISST).

Belongs to the bacterial CoaD family. Homohexamer. Mg(2+) serves as cofactor.

Its subcellular location is the cytoplasm. The enzyme catalyses (R)-4'-phosphopantetheine + ATP + H(+) = 3'-dephospho-CoA + diphosphate. The protein operates within cofactor biosynthesis; coenzyme A biosynthesis; CoA from (R)-pantothenate: step 4/5. Functionally, reversibly transfers an adenylyl group from ATP to 4'-phosphopantetheine, yielding dephospho-CoA (dPCoA) and pyrophosphate. This chain is Phosphopantetheine adenylyltransferase, found in Pseudomonas putida (strain GB-1).